A 387-amino-acid chain; its full sequence is MRMLIFTYKLERYIKNKILPKILVVPDRDKYQIKGSFRRRIPYITDIDIVNNVHPEYDDTNIYQRIVDLINSFTNDNQIKLIYVICGTDDRFLLTEYSDEEIEKIKILLNPTELVELNNVLSKYQDDLNKKVFYINEIIWDLYKLRWTSSEVLAGKKILRGGIEVSFQDVVKNNSILLLQYFVKIEYYPIGFDIAVRYKPINLITAYQNAAFYQLKLANYSKEYYFMLFPLRFYFKNDPTISKQLEYIIETKFGLYKQLLVRIDSYRTIYESGNLDLDTAKSIIISIIKDIRKLNGIDMNIIDKIQEVSNNSAGQDKIIAWNTLLTQLYTNINKSVNKQSKKYFTRYINIIPKEDRKLCCLEEEHVLQSGGINFESTNFLTKKKLIY.

It is found in the virion. This is an uncharacterized protein from Acanthamoeba polyphaga (Amoeba).